Reading from the N-terminus, the 1547-residue chain is Tubby-related protein 4 (1547 aa).

3 WD repeats span residues 80–119 (GHNS…WSVE), 123–162 (DRGA…HWSS), and 165–204 (NLES…LAHV). The 51-residue stretch at 364–414 (ALYVVRVEHRVSSLQLLCQQAIASTLREDKDVNKLTLPPRLCSYLSTAFIP) folds into the SOCS box domain. The interval 530-580 (SPKISRSSKSPKLPRISIEARKSPKLPRAAQEISRSPRLPMRKPSMGSPSL) is disordered. Residues 533-546 (ISRSSKSPKLPRIS) show a composition bias toward low complexity. At S577 the chain carries Phosphoserine. An asymmetric dimethylarginine mark is found at R949 and R954. Residues S1347 and S1378 each carry the phosphoserine modification. The segment at 1374-1414 (SLISSPRLGREKKKVKSQKDQLKSKKLNKTNEFQDSSESEP) is disordered. Positions 1436–1547 (SKRSLRTASE…ALANVTQRLK (112 aa)) are TUB.

This sequence belongs to the TUB family.

The protein resides in the cytoplasm. It participates in protein modification; protein ubiquitination. Its function is as follows. May be a substrate-recognition component of a SCF-like ECS (Elongin-Cullin-SOCS-box protein) E3 ubiquitin ligase complex which mediates the ubiquitination and subsequent proteasomal degradation of target proteins. This chain is Tubby-related protein 4 (Tulp4), found in Mus musculus (Mouse).